The sequence spans 372 residues: Dual-specificity RNA methyltransferase RlmN (372 aa).

Catalysis depends on E94, which acts as the Proton acceptor. Residues 100-339 enclose the Radical SAM core domain; the sequence is DGDRATLCVS…VTIRKTRGDD (240 aa). C107 and C344 are oxidised to a cystine. [4Fe-4S] cluster-binding residues include C114, C118, and C121. S-adenosyl-L-methionine contacts are provided by residues 168-169, S200, 222-224, and N301; these read GE and SLH. C344 (S-methylcysteine intermediate) is an active-site residue.

The protein belongs to the radical SAM superfamily. RlmN family. The cofactor is [4Fe-4S] cluster.

The protein resides in the cytoplasm. The enzyme catalyses adenosine(2503) in 23S rRNA + 2 reduced [2Fe-2S]-[ferredoxin] + 2 S-adenosyl-L-methionine = 2-methyladenosine(2503) in 23S rRNA + 5'-deoxyadenosine + L-methionine + 2 oxidized [2Fe-2S]-[ferredoxin] + S-adenosyl-L-homocysteine. The catalysed reaction is adenosine(37) in tRNA + 2 reduced [2Fe-2S]-[ferredoxin] + 2 S-adenosyl-L-methionine = 2-methyladenosine(37) in tRNA + 5'-deoxyadenosine + L-methionine + 2 oxidized [2Fe-2S]-[ferredoxin] + S-adenosyl-L-homocysteine. In terms of biological role, specifically methylates position 2 of adenine 2503 in 23S rRNA and position 2 of adenine 37 in tRNAs. m2A2503 modification seems to play a crucial role in the proofreading step occurring at the peptidyl transferase center and thus would serve to optimize ribosomal fidelity. The sequence is that of Dual-specificity RNA methyltransferase RlmN from Aliivibrio fischeri (strain MJ11) (Vibrio fischeri).